A 180-amino-acid polypeptide reads, in one-letter code: Large ribosomal subunit protein uL6 (180 aa).

The protein belongs to the universal ribosomal protein uL6 family. As to quaternary structure, part of the 50S ribosomal subunit.

This protein binds to the 23S rRNA, and is important in its secondary structure. It is located near the subunit interface in the base of the L7/L12 stalk, and near the tRNA binding site of the peptidyltransferase center. The chain is Large ribosomal subunit protein uL6 from Picrophilus torridus (strain ATCC 700027 / DSM 9790 / JCM 10055 / NBRC 100828 / KAW 2/3).